The sequence spans 63 residues: DNA-directed RNA polymerase 7 kDa subunit (63 aa).

The protein belongs to the poxviridae DNA-directed RNA polymerase 7 kDa subunit family. As to quaternary structure, the DNA-dependent RNA polymerase used for intermediate and late genes expression consists of eight subunits 147 kDa, 133 kDa, 35 kDa, 30 kDa, 22 kDa, 19 kDa, 18 kDa and 7 kDa totalling more than 500 kDa in mass. The same holoenzyme, with the addition of the transcription-specificity factor RAP94, is used for early gene expression.

It localises to the virion. The catalysed reaction is RNA(n) + a ribonucleoside 5'-triphosphate = RNA(n+1) + diphosphate. Its function is as follows. Part of the DNA-dependent RNA polymerase which catalyzes the transcription of viral DNA into RNA using the four ribonucleoside triphosphates as substrates. Responsible for the transcription of early, intermediate and late genes. DNA-dependent RNA polymerase associates with the early transcription factor (ETF) thereby allowing the early genes transcription. Late transcription, and probably also intermediate transcription, require newly synthesized RNA polymerase. The protein is DNA-directed RNA polymerase 7 kDa subunit (RPO7) of Homo sapiens (Human).